A 138-amino-acid chain; its full sequence is Large ribosomal subunit protein uL16 (138 aa).

It belongs to the universal ribosomal protein uL16 family. As to quaternary structure, part of the 50S ribosomal subunit.

Binds 23S rRNA and is also seen to make contacts with the A and possibly P site tRNAs. In Nitrosomonas europaea (strain ATCC 19718 / CIP 103999 / KCTC 2705 / NBRC 14298), this protein is Large ribosomal subunit protein uL16.